The sequence spans 249 residues: Ubiquinone biosynthesis protein COQ4 homolog, mitochondrial (249 aa).

Residues His-134, Asp-135, His-138, and Glu-150 each coordinate Zn(2+).

The protein belongs to the COQ4 family. Component of a multi-subunit COQ enzyme complex. Requires Zn(2+) as cofactor.

It is found in the mitochondrion inner membrane. The enzyme catalyses a 4-hydroxy-3-methoxy-5-(all-trans-polyprenyl)benzoate + H(+) = a 2-methoxy-6-(all-trans-polyprenyl)phenol + CO2. Its pathway is cofactor biosynthesis; ubiquinone biosynthesis. Functionally, lyase that catalyzes the C1-decarboxylation of 4-hydroxy-3-methoxy-5-(all-trans-polyprenyl)benzoic acid into 2-methoxy-6-(all-trans-polyprenyl)phenol during ubiquinone biosynthesis. This Trypanosoma brucei brucei (strain 927/4 GUTat10.1) protein is Ubiquinone biosynthesis protein COQ4 homolog, mitochondrial.